A 377-amino-acid chain; its full sequence is uncharacterized protein (377 aa).

Polar residues-rich tracts occupy residues 1-11 (MSSIQGTSGSS) and 31-43 (PSGQTISFSAVGK). Disordered regions lie at residues 1-43 (MSSI…AVGK), 109-141 (SSEEQLESPGVRNKSALKGTNRSNSHREEIARN), and 328-377 (SSSP…RGFQ). Residues 334–345 (EDPRSLRDRLRD) show a composition bias toward basic and acidic residues.

The protein belongs to the chlamydial CPn_0499/CT_392/TC_0671 family.

This is an uncharacterized protein from Chlamydia trachomatis serovar D (strain ATCC VR-885 / DSM 19411 / UW-3/Cx).